A 1558-amino-acid chain; its full sequence is Arginine-glutamic acid dipeptide repeats protein (1558 aa).

The span at 1–36 shows a compositional bias: basic and acidic residues; it reads MTADKDKDKDKEKDRDRDRDRERDKRDKARESENAR. The segment at 1–90 is disordered; that stretch reads MTADKDKDKD…KKKSRYERTD (90 aa). Ser53 and Ser56 each carry phosphoserine. Residues 74–85 are compositionally biased toward basic residues; it reads KSRKKPPKKKSR. The 181-residue stretch at 103–283 folds into the BAH domain; it reads VVYRPGDCVY…PETRRLNSTQ (181 aa). Thr120 carries the phosphothreonine modification. 2 positions are modified to phosphoserine: Ser142 and Ser304. The ELM2 domain maps to 284–387; it reads GEIRVGPSHQ…KALQRLVKKP (104 aa). The 53-residue stretch at 391–443 folds into the SANT domain; sequence LIEKCWTEDEVKRFVKGLRQYGKNFFRIRKELLPSKETGELITFYYYWKKTPE. The interval 464–495 is disordered; sequence TRTASTPVNTPSRPPSSEFLDLSSASEDDFDS. Residues 465-474 are compositionally biased toward polar residues; it reads RTASTPVNTP. A compositionally biased stretch (low complexity) spans 479-488; that stretch reads SSEFLDLSSA. A GATA-type zinc finger spans residues 507-532; the sequence is CRHCFTTTSKDWHHGGRENILLCTDC. The tract at residues 542–1125 is disordered; that stretch reads LPPIEKPVDP…PSHASQSARF (584 aa). A Glycyl lysine isopeptide (Lys-Gly) (interchain with G-Cter in SUMO2) cross-link involves residue Lys560. Thr593 is subject to Phosphothreonine. Ser594, Ser600, and Ser613 each carry phosphoserine. Over residues 609 to 623 the composition is skewed to low complexity; that stretch reads SGRNSPSAASTSSND. A compositionally biased stretch (basic and acidic residues) spans 624–640; it reads SKAETVKKSAKKVKEEA. Residue Lys637 forms a Glycyl lysine isopeptide (Lys-Gly) (interchain with G-Cter in SUMO2) linkage. Ser642, Ser656, Ser675, and Ser679 each carry phosphoserine. The segment covering 652–673 has biased composition (basic and acidic residues); it reads EKVASDTEDTDRITSKKTKTQE. Residues 688–708 are compositionally biased toward basic and acidic residues; that stretch reads SDSRSVNDEGSSDPKDIDQDN. Polar residues predominate over residues 709-720; sequence RSTSPSIPSPQD. The span at 726–752 shows a compositional bias: low complexity; it reads DSSAQQQMLQAQPPALQAPSGAASAPS. Residues 778–792 are compositionally biased toward polar residues; it reads SPATSQPPNQTQSTV. The segment covering 806 to 823 has biased composition (pro residues); sequence LHPPRLPSPHPPLQPMTA. 3 stretches are compositionally biased toward low complexity: residues 824-857, 865-874, and 891-901; these read PPSQSSAQPHPQPSLHSQGPPGPHSLQTGPLLQH, GLPSQPSQGQ, and QLPASQSALQP. Over residues 902–932 the composition is skewed to pro residues; the sequence is QQPPREQPLPPAPLAMPHIKPPPTTPIPQLP. Positions 962–972 are enriched in low complexity; sequence KPLSSLSTHHP. Positions 1012–1023 are enriched in polar residues; that stretch reads HPTTGLHQVPSQ. A compositionally biased stretch (pro residues) spans 1027 to 1053; the sequence is PQHPFVPGGPPPITPPSCPPTSTPPAG. Residues 1054-1077 are compositionally biased toward low complexity; the sequence is PSSSSQPPCSAAVSSGGSVPGAPS. Phosphoserine is present on residues Ser1098, Ser1105, and Ser1107. Positions 1098 to 1109 are enriched in pro residues; sequence SPPPPPRSPSPE. At Thr1111 the chain carries Phosphothreonine. Residues 1148 to 1203 adopt a coiled-coil conformation; it reads GSKLAKKREEAIEKAKREAEQKAREEREREKEKEKEREREREREREAERAAKASSS. An N6-acetyllysine modification is found at Lys1150. Positions 1154 to 1198 are enriched in basic and acidic residues; that stretch reads KREEAIEKAKREAEQKAREEREREKEKEKEREREREREREAERAA. Positions 1154-1238 are disordered; sequence KREEAIEKAK…TTIAAVPPYI (85 aa). Phosphotyrosine is present on Tyr1251. Ser1258 is subject to Phosphoserine.

In terms of assembly, interacts with HDAC1 and ATN1. Interaction with ATN1 is improved when the poly-Gln region of ATN1 is extended. Interacts with FAT1.

It localises to the nucleus. Its subcellular location is the PML body. Its function is as follows. Plays a role as a transcriptional repressor during development. May play a role in the control of cell survival. The sequence is that of Arginine-glutamic acid dipeptide repeats protein (Rere) from Mus musculus (Mouse).